The following is a 348-amino-acid chain: Glucan endo-1,3-beta-glucosidase, basic isoform (348 aa).

The residue at position 1 (Gln-1) is a Pyrrolidone carboxylic acid. The Proton donor role is filled by Glu-95. The Nucleophile role is filled by Glu-240. Residues 317 to 348 constitute a propeptide, removed in mature form; it reads AQRMQRLLLMSSMQHIPLRVTCKLEPSSQSLL.

The protein belongs to the glycosyl hydrolase 17 family.

It localises to the vacuole. It catalyses the reaction Hydrolysis of (1-&gt;3)-beta-D-glucosidic linkages in (1-&gt;3)-beta-D-glucans.. Implicated in the defense of plants against pathogens. This chain is Glucan endo-1,3-beta-glucosidase, basic isoform, found in Phaseolus vulgaris (Kidney bean).